Consider the following 610-residue polypeptide: UvrABC system protein C (610 aa).

Residues 16–94 enclose the GIY-YIG domain; sequence SQPGVYRMYD…IKLYQPRYNV (79 aa). The UVR domain maps to 204 to 239; the sequence is DQVLNQLVARMEQASGDLRFEEAGRLRDQIQAVRRV.

It belongs to the UvrC family. In terms of assembly, interacts with UvrB in an incision complex.

Its subcellular location is the cytoplasm. The UvrABC repair system catalyzes the recognition and processing of DNA lesions. UvrC both incises the 5' and 3' sides of the lesion. The N-terminal half is responsible for the 3' incision and the C-terminal half is responsible for the 5' incision. This chain is UvrABC system protein C, found in Erwinia tasmaniensis (strain DSM 17950 / CFBP 7177 / CIP 109463 / NCPPB 4357 / Et1/99).